Reading from the N-terminus, the 385-residue chain is Succinate--CoA ligase [ADP-forming] subunit beta (385 aa).

One can recognise an ATP-grasp domain in the interval 9 to 244; sequence KEVLRKYGVS…LDEEDPKEIE (236 aa). ATP is bound by residues Lys-46, 53–55, Glu-99, Cys-102, and Glu-107; that span reads GRG. Asn-199 and Asp-213 together coordinate Mg(2+). Ser-220 carries the post-translational modification Phosphoserine. Residues Asn-264 and 321–323 each bind substrate; that span reads GIM.

It belongs to the succinate/malate CoA ligase beta subunit family. Heterotetramer of two alpha and two beta subunits. Interacts with BrxC. Requires Mg(2+) as cofactor.

It catalyses the reaction succinate + ATP + CoA = succinyl-CoA + ADP + phosphate. It carries out the reaction GTP + succinate + CoA = succinyl-CoA + GDP + phosphate. It participates in carbohydrate metabolism; tricarboxylic acid cycle; succinate from succinyl-CoA (ligase route): step 1/1. Succinyl-CoA synthetase functions in the citric acid cycle (TCA), coupling the hydrolysis of succinyl-CoA to the synthesis of either ATP or GTP and thus represents the only step of substrate-level phosphorylation in the TCA. The beta subunit provides nucleotide specificity of the enzyme and binds the substrate succinate, while the binding sites for coenzyme A and phosphate are found in the alpha subunit. This Bacillus subtilis (strain 168) protein is Succinate--CoA ligase [ADP-forming] subunit beta.